The primary structure comprises 113 residues: UPF0342 protein MGAS2096_Spy0691 (113 aa).

This sequence belongs to the UPF0342 family.

The polypeptide is UPF0342 protein MGAS2096_Spy0691 (Streptococcus pyogenes serotype M12 (strain MGAS2096)).